The sequence spans 812 residues: Lon protease (812 aa).

The Lon N-terminal domain maps to 22-215 (YAVLPLRDIV…KALSFMEAEI (194 aa)). 367–374 (GPPGVGKT) lines the ATP pocket. The region spanning 602 to 783 (EDQVGVVTGL…GEVLKHALVR (182 aa)) is the Lon proteolytic domain. Residues Ser-689 and Lys-732 contribute to the active site. A disordered region spans residues 787–812 (PIEWTEQENPTAVPPVEDEAGASLAH).

It belongs to the peptidase S16 family. In terms of assembly, homohexamer. Organized in a ring with a central cavity.

It localises to the cytoplasm. The enzyme catalyses Hydrolysis of proteins in presence of ATP.. In terms of biological role, ATP-dependent serine protease that mediates the selective degradation of mutant and abnormal proteins as well as certain short-lived regulatory proteins. Required for cellular homeostasis and for survival from DNA damage and developmental changes induced by stress. Degrades polypeptides processively to yield small peptide fragments that are 5 to 10 amino acids long. Binds to DNA in a double-stranded, site-specific manner. In Brucella melitensis biotype 1 (strain ATCC 23456 / CCUG 17765 / NCTC 10094 / 16M), this protein is Lon protease.